A 648-amino-acid polypeptide reads, in one-letter code: MEELKAYRPKTSPELDPSTLSNYTCFTVKLTTLHFDIDFEKKIVSGKVKYDLLNKSETDHVDLDTSYLDITKVSIQNESCDNQYKLHSRKEPLGSKLHILIPASTPKNFQLEIEFSTTSKCTALQFLDKEATDGKNHPYLFCQCQAIHARSLFPSFDTPGIKSPYKFSAKSPLKTLLSGLLIKEDNENNTVYFEQPVPIPSYLVSIALGDIARTSIGPRSDVMTEPVNLAKCKWEFERDMENFIQVAEKLIFEYEWQKFDSLVLPASFPYGGMEIPNLCQLTPTLICGDRSLVNVVAHELAHSWSGNLVTNCSWEHFWLNEGWTVYLERRILEALAVIEAKQQGKGDKEAHYYGEQVRQFNAIIGWTDLENDLKSMGDNVDKYSILVQDLKGKKNPDDPDDAFSTVPYEKGFNLLYLIEKIVGKEKFDLFIPAYFREFRFKSLDTFQFIDYLFDFFKEDAVKLDQIEWKKWLYEPGMPPIDPKFDTTLAQACYDLAKKCYQYALSEDDENEFTQFKLVANEINDFSPSQNIVFLDTLIAYEKVAGFSWKQHKKTLNRMATLYHDQYTETLNAEIKFRWFYLQATGEVLDFEVAMGEFLGTIGRMKFVRPGYALLNKVNRELAVRYFQRFENRYHPICKAMVRKDLQLD.

A peptide is bound by residues 143 to 145 (QCQ) and 269 to 274 (PYGGME). His-298 lines the Zn(2+) pocket. The active-site Proton acceptor is Glu-299. Zn(2+) contacts are provided by His-302 and Glu-321. Residue Tyr-408 is the Proton donor of the active site.

The protein belongs to the peptidase M1 family. Requires Zn(2+) as cofactor.

The protein localises to the cytoplasm. It localises to the nucleus. It catalyses the reaction an epoxide + H2O = an ethanediol. Aminopeptidase that preferentially cleaves di- and tripeptides. Also has low epoxide hydrolase activity (in vitro). Can hydrolyze the epoxide leukotriene LTA(4) but it forms preferentially 5,6-dihydroxy-7,9,11,14-eicosatetraenoic acid rather than the cytokine leukotriene B(4) as the product compared to the homologous mammalian enzyme (in vitro). In Lodderomyces elongisporus (strain ATCC 11503 / CBS 2605 / JCM 1781 / NBRC 1676 / NRRL YB-4239) (Yeast), this protein is Leucine aminopeptidase 2.